Here is a 568-residue protein sequence, read N- to C-terminus: Proline--tRNA ligase (568 aa).

Belongs to the class-II aminoacyl-tRNA synthetase family. ProS type 1 subfamily. Homodimer.

The protein localises to the cytoplasm. It carries out the reaction tRNA(Pro) + L-proline + ATP = L-prolyl-tRNA(Pro) + AMP + diphosphate. Its function is as follows. Catalyzes the attachment of proline to tRNA(Pro) in a two-step reaction: proline is first activated by ATP to form Pro-AMP and then transferred to the acceptor end of tRNA(Pro). As ProRS can inadvertently accommodate and process non-cognate amino acids such as alanine and cysteine, to avoid such errors it has two additional distinct editing activities against alanine. One activity is designated as 'pretransfer' editing and involves the tRNA(Pro)-independent hydrolysis of activated Ala-AMP. The other activity is designated 'posttransfer' editing and involves deacylation of mischarged Ala-tRNA(Pro). The misacylated Cys-tRNA(Pro) is not edited by ProRS. This is Proline--tRNA ligase from Macrococcus caseolyticus (strain JCSC5402) (Macrococcoides caseolyticum).